We begin with the raw amino-acid sequence, 464 residues long: Hepatocyte nuclear factor 4-alpha (464 aa).

The nuclear receptor DNA-binding region spans 57-132 (NSLCAICGDR…AGMKKEAVQN (76 aa)). NR C4-type zinc fingers lie at residues 60 to 80 (CAICGDRATGKHYGASSCDGC) and 96 to 120 (CRFSRQCVVDKDKRNQCRYCRLKKC). One can recognise an NR LBD domain in the interval 147–376 (SSLPSINVLI…NLLQEMLLGG (230 aa)). Positions 367–375 (NLLQEMLLG) match the 9aaTAD motif. Residues 410–421 (SQLHNGQMSTPE) are compositionally biased toward polar residues. Residues 410–433 (SQLHNGQMSTPETPQPSPPAGSGA) are disordered.

This sequence belongs to the nuclear hormone receptor family. NR2 subfamily. In terms of assembly, homodimerization is required for HNF4-alpha to bind to its recognition site. As to expression, expressed in liver and kidney.

The protein resides in the nucleus. Transcriptional regulator; binds and activates the promoter for the HNF1-alpha gene. Potential initiator of a transcriptional cascade within a subset of cells committed to a specific developmental program. Could be a determinant for asymmetry in early development. May play a role in the regulation of the circadian clock. This Xenopus laevis (African clawed frog) protein is Hepatocyte nuclear factor 4-alpha (hnf4a).